We begin with the raw amino-acid sequence, 139 residues long: Transcription antitermination protein NusB (139 aa).

This sequence belongs to the NusB family.

In terms of biological role, involved in transcription antitermination. Required for transcription of ribosomal RNA (rRNA) genes. Binds specifically to the boxA antiterminator sequence of the ribosomal RNA (rrn) operons. This Natranaerobius thermophilus (strain ATCC BAA-1301 / DSM 18059 / JW/NM-WN-LF) protein is Transcription antitermination protein NusB.